The primary structure comprises 519 residues: Ribonuclease Y (519 aa).

Residues 6 to 26 form a helical membrane-spanning segment; the sequence is VPFYLLIFLVGIGLGVLTFWA. In terms of domain architecture, KH spans 209-272; it reads TVCTVTIPNE…HIAKMALTEL (64 aa). In terms of domain architecture, HD spans 335 to 428; sequence VLDHSLEVSH…CSAADAISAS (94 aa).

This sequence belongs to the RNase Y family.

Its subcellular location is the cell membrane. In terms of biological role, endoribonuclease that initiates mRNA decay. The polypeptide is Ribonuclease Y (Protochlamydia amoebophila (strain UWE25)).